A 362-amino-acid polypeptide reads, in one-letter code: Heme A synthase (362 aa).

The next 5 membrane-spanning stretches (helical) occupy residues 15–35 (VRIW…VGGA), 104–124 (VIGI…AIAP), 129–149 (ALWA…WMVA), 161–181 (VRLA…VWTL), and 200–220 (AIAL…VAGL). Residue H264 participates in heme binding. Transmembrane regions (helical) follow at residues 266 to 285 (MMAY…ALRA), 293 to 313 (GALW…LTLL), and 316 to 336 (VPIG…TLAV). H324 provides a ligand contact to heme.

It belongs to the COX15/CtaA family. Type 2 subfamily. As to quaternary structure, interacts with CtaB. Heme b is required as a cofactor.

It is found in the cell membrane. It carries out the reaction Fe(II)-heme o + 2 A + H2O = Fe(II)-heme a + 2 AH2. It participates in porphyrin-containing compound metabolism; heme A biosynthesis; heme A from heme O: step 1/1. In terms of biological role, catalyzes the conversion of heme O to heme A by two successive hydroxylations of the methyl group at C8. The first hydroxylation forms heme I, the second hydroxylation results in an unstable dihydroxymethyl group, which spontaneously dehydrates, resulting in the formyl group of heme A. This is Heme A synthase from Rhodopseudomonas palustris (strain BisB5).